A 611-amino-acid chain; its full sequence is Elongation factor 4 (611 aa).

The region spanning 12–193 is the tr-type G domain; it reads AVIRNFCIIA…TIVAKVPAPE (182 aa). GTP is bound by residues 24–29 and 140–143; these read DHGKST and NKID.

Belongs to the TRAFAC class translation factor GTPase superfamily. Classic translation factor GTPase family. LepA subfamily.

Its subcellular location is the cell membrane. The catalysed reaction is GTP + H2O = GDP + phosphate + H(+). In terms of biological role, required for accurate and efficient protein synthesis under certain stress conditions. May act as a fidelity factor of the translation reaction, by catalyzing a one-codon backward translocation of tRNAs on improperly translocated ribosomes. Back-translocation proceeds from a post-translocation (POST) complex to a pre-translocation (PRE) complex, thus giving elongation factor G a second chance to translocate the tRNAs correctly. Binds to ribosomes in a GTP-dependent manner. The sequence is that of Elongation factor 4 from Cutibacterium acnes (strain DSM 16379 / KPA171202) (Propionibacterium acnes).